A 193-amino-acid chain; its full sequence is Bcl-2-like protein 2 (193 aa).

The residue at position 2 (Ala2) is an N-acetylalanine. The BH4 signature appears at 9–29; the sequence is DTRALVADFVGYKLRQKGYVC. The BH1 motif lies at 85 to 104; sequence ELFQGGPNWGRLVAFFVFGA. The BH2 motif lies at 136 to 151; that stretch reads DWIHSSGGWAEFTALY.

Belongs to the Bcl-2 family. Interacts with HIF3A isoform 2 (via C-terminus domain). Interacts with BOP. In terms of tissue distribution, expressed in almost all myeloid cell lines and in a wide range of tissues, with highest levels in brain, colon, and salivary gland.

It localises to the mitochondrion membrane. In terms of biological role, promotes cell survival. Blocks dexamethasone-induced apoptosis. Mediates survival of postmitotic Sertoli cells by suppressing death-promoting activity of BAX. This chain is Bcl-2-like protein 2 (Bcl2l2), found in Mus musculus (Mouse).